The chain runs to 319 residues: Transaldolase (319 aa).

K125 serves as the catalytic Schiff-base intermediate with substrate.

It belongs to the transaldolase family. Type 1 subfamily. In terms of assembly, homodimer.

Its subcellular location is the cytoplasm. It catalyses the reaction D-sedoheptulose 7-phosphate + D-glyceraldehyde 3-phosphate = D-erythrose 4-phosphate + beta-D-fructose 6-phosphate. The protein operates within carbohydrate degradation; pentose phosphate pathway; D-glyceraldehyde 3-phosphate and beta-D-fructose 6-phosphate from D-ribose 5-phosphate and D-xylulose 5-phosphate (non-oxidative stage): step 2/3. Its function is as follows. Transaldolase is important for the balance of metabolites in the pentose-phosphate pathway. This Ralstonia pickettii (strain 12J) protein is Transaldolase.